We begin with the raw amino-acid sequence, 265 residues long: Anaphase-promoting complex subunit 9 (265 aa).

In terms of assembly, the APC/C is composed of at least 13 subunits that stay tightly associated throughout the cell cycle: APC1, APC2, APC4, APC5, APC9, APC11, CDC16, CDC23, CDC26, CDC27, DOC1, MND2 and SWM1.

Its subcellular location is the cytoplasm. It localises to the nucleus. It participates in protein modification; protein ubiquitination. Component of the anaphase promoting complex/cyclosome (APC/C), a cell cycle-regulated E3 ubiquitin-protein ligase complex that controls progression through mitosis and the G1 phase of the cell cycle. The APC/C is thought to confer substrate specificity and, in the presence of ubiquitin-conjugating E2 enzymes, it catalyzes the formation of protein-ubiquitin conjugates that are subsequently degraded by the 26S proteasome. In early mitosis, the APC/C is activated by CDC20 and targets securin PDS1, the B-type cyclin CLB5, and other anaphase inhibitory proteins for proteolysis, thereby triggering the separation of sister chromatids at the metaphase-to-anaphase transition. In late mitosis and in G1, degradation of CLB5 allows activation of the APC/C by CDH1, which is needed to destroy CDC20 and the B-type cyclin CLB2 to allow exit from mitosis and creating the low CDK state necessary for cytokinesis and for reforming prereplicative complexes in G1 prior to another round of replication. This is Anaphase-promoting complex subunit 9 (APC9) from Saccharomyces cerevisiae (strain ATCC 204508 / S288c) (Baker's yeast).